Consider the following 555-residue polypeptide: Pentatricopeptide repeat-containing protein At2g44880 (555 aa).

PPR repeat units follow at residues 41–75 (DSFL…TCFA), 77–111 (DNFT…GFCA), 112–142 (DMYV…MPHR), 143–173 (SEVS…MPHV), 175–205 (DVVI…MTHK), 206–240 (TVIT…NLVS), 241–267 (WNTM…MQAT), 273–307 (DDVT…KLDK), 308–342 (KVKV…QVAS), 343–370 (WNAM…MIEE), 373–407 (DEIT…GLNA), and 408–438 (KIEH…MPFE). A type E motif region spans residues 443 to 518 (ILSSFLSACG…EVGCSLIEIN (76 aa)). The tract at residues 519–549 (YIVSEFISGDTTHPHRRSIHLVLGDLLMHMN) is type E(+) motif.

It belongs to the PPR family. PCMP-E subfamily.

This Arabidopsis thaliana (Mouse-ear cress) protein is Pentatricopeptide repeat-containing protein At2g44880 (PCMP-E9).